The primary structure comprises 447 residues: UPF0210 protein LAF_0976 (447 aa).

The protein belongs to the UPF0210 family. As to quaternary structure, homodimer.

This is UPF0210 protein LAF_0976 from Limosilactobacillus fermentum (strain NBRC 3956 / LMG 18251) (Lactobacillus fermentum).